Consider the following 884-residue polypeptide: Protein translocase subunit SecA (884 aa).

Residues glutamine 88, 106 to 110, and aspartate 509 each bind ATP; that span reads GEGKT. Residues 822 to 884 form a disordered region; it reads EQKKLKMSGA…PKKGLFANND (63 aa). Basic and acidic residues predominate over residues 833-842; it reads KGGEDLEETK. Cysteine 858, cysteine 860, cysteine 869, and histidine 870 together coordinate Zn(2+).

Belongs to the SecA family. In terms of assembly, monomer and homodimer. Part of the essential Sec protein translocation apparatus which comprises SecA, SecYEG and auxiliary proteins SecDF-YajC and YidC. Requires Zn(2+) as cofactor.

The protein localises to the cell inner membrane. It localises to the cytoplasm. It carries out the reaction ATP + H2O + cellular proteinSide 1 = ADP + phosphate + cellular proteinSide 2.. Part of the Sec protein translocase complex. Interacts with the SecYEG preprotein conducting channel. Has a central role in coupling the hydrolysis of ATP to the transfer of proteins into and across the cell membrane, serving as an ATP-driven molecular motor driving the stepwise translocation of polypeptide chains across the membrane. The sequence is that of Protein translocase subunit SecA from Campylobacter hominis (strain ATCC BAA-381 / DSM 21671 / CCUG 45161 / LMG 19568 / NCTC 13146 / CH001A).